The following is a 207-amino-acid chain: Small ribosomal subunit protein eS1 (207 aa).

It belongs to the eukaryotic ribosomal protein eS1 family.

The protein is Small ribosomal subunit protein eS1 of Methanosarcina barkeri (strain Fusaro / DSM 804).